Consider the following 899-residue polypeptide: DNA mismatch repair protein MutS (899 aa).

The segment at Met-1–Arg-20 is disordered. Gly-631–Ser-638 contributes to the ATP binding site. Positions Pro-832–Pro-852 are disordered. Residues Gly-843–Pro-852 are compositionally biased toward low complexity.

The protein belongs to the DNA mismatch repair MutS family.

Its function is as follows. This protein is involved in the repair of mismatches in DNA. It is possible that it carries out the mismatch recognition step. This protein has a weak ATPase activity. The sequence is that of DNA mismatch repair protein MutS from Cupriavidus necator (strain ATCC 17699 / DSM 428 / KCTC 22496 / NCIMB 10442 / H16 / Stanier 337) (Ralstonia eutropha).